Here is a 611-residue protein sequence, read N- to C-terminus: U-box domain-containing protein 12 (611 aa).

The 75-residue stretch at 227-301 (IIPDEFRCPI…SQWCEANGIE (75 aa)) folds into the U-box domain. ARM repeat units lie at residues 355–394 (VNNR…NLSI), 396–435 (ENNK…SLSV), 437–476 (DENK…NLCI), and 478–517 (QGNK…ILAG).

It catalyses the reaction S-ubiquitinyl-[E2 ubiquitin-conjugating enzyme]-L-cysteine + [acceptor protein]-L-lysine = [E2 ubiquitin-conjugating enzyme]-L-cysteine + N(6)-ubiquitinyl-[acceptor protein]-L-lysine.. It participates in protein modification; protein ubiquitination. In terms of biological role, possesses E3 ubiquitin-protein ligase in vitro. The chain is U-box domain-containing protein 12 (PUB12) from Oryza sativa subsp. japonica (Rice).